Consider the following 439-residue polypeptide: Xylose isomerase (439 aa).

Catalysis depends on residues histidine 101 and aspartate 104. Mg(2+)-binding residues include glutamate 232, glutamate 268, histidine 271, aspartate 296, aspartate 307, aspartate 309, and aspartate 339.

Belongs to the xylose isomerase family. In terms of assembly, homotetramer. Mg(2+) serves as cofactor.

The protein resides in the cytoplasm. It catalyses the reaction alpha-D-xylose = alpha-D-xylulofuranose. This is Xylose isomerase from Marinomonas sp. (strain MWYL1).